A 122-amino-acid polypeptide reads, in one-letter code: Large ribosomal subunit protein bL12 (122 aa).

It belongs to the bacterial ribosomal protein bL12 family. Homodimer. Part of the ribosomal stalk of the 50S ribosomal subunit. Forms a multimeric L10(L12)X complex, where L10 forms an elongated spine to which 2 to 4 L12 dimers bind in a sequential fashion. Binds GTP-bound translation factors.

Forms part of the ribosomal stalk which helps the ribosome interact with GTP-bound translation factors. Is thus essential for accurate translation. This is Large ribosomal subunit protein bL12 from Sulfurimonas denitrificans (strain ATCC 33889 / DSM 1251) (Thiomicrospira denitrificans (strain ATCC 33889 / DSM 1251)).